A 230-amino-acid polypeptide reads, in one-letter code: Modulator of macroautophagy TMEM150B (230 aa).

Position 1 (methionine 1) is a topological domain, cytoplasmic. Residues 2–22 (WAWALLPICLTIWATAGIWIV) traverse the membrane as a helical segment. Topologically, residues 23 to 50 (YGMSVSNGSVNLTDGFPFISLCGTYPPQ) are extracellular. N-linked (GlcNAc...) asparagine glycans are attached at residues asparagine 29 and asparagine 33. A helical transmembrane segment spans residues 51–71 (SCVFGQVLNVGAMLGVWISVI). The Cytoplasmic segment spans residues 72–83 (RFQQIRDYGCHS). Residues 84–104 (VLNSVSLAMGLLCALGTSIVG) traverse the membrane as a helical segment. At 105–115 (NFQQSNQLETH) the chain is on the extracellular side. Residues 116-136 (LAGAFLAFVIGNIYFWMQTVL) traverse the membrane as a helical segment. Over 137–150 (TYMVKPKHGGCYIG) the chain is Cytoplasmic. A helical membrane pass occupies residues 151–171 (PIRFCLSVACTALIVLMAVFL). The Extracellular segment spans residues 172 to 183 (KLNMKSISAICE). A helical transmembrane segment spans residues 184 to 204 (WIVAMILFLLYGLFSVDFWHL). Residues 205-230 (DGHYFHVKKRTAIPNEVEVSTVTLNI) are Cytoplasmic-facing.

The protein belongs to the DRAM/TMEM150 family.

Its subcellular location is the cell membrane. The protein resides in the endosome membrane. It localises to the cytoplasmic vesicle. The protein localises to the autophagosome membrane. Its function is as follows. Modulator of macroautophagy that causes accumulation of autophagosomes under basal conditions and enhances autophagic flux. Represses cell death and promotes long-term clonogenic survival of cells grown in the absence of glucose in a macroautophagy-independent manner. May have some role in extracellular matrix engulfment or growth factor receptor recycling, both of which can modulate cell survival. This chain is Modulator of macroautophagy TMEM150B, found in Xenopus tropicalis (Western clawed frog).